The primary structure comprises 262 residues: Ribosomal RNA small subunit methyltransferase A (262 aa).

S-adenosyl-L-methionine is bound by residues Asn14, Leu16, Gly41, Glu62, Asp87, and Asn109.

The protein belongs to the class I-like SAM-binding methyltransferase superfamily. rRNA adenine N(6)-methyltransferase family. RsmA subfamily.

The protein resides in the cytoplasm. The catalysed reaction is adenosine(1518)/adenosine(1519) in 16S rRNA + 4 S-adenosyl-L-methionine = N(6)-dimethyladenosine(1518)/N(6)-dimethyladenosine(1519) in 16S rRNA + 4 S-adenosyl-L-homocysteine + 4 H(+). Functionally, specifically dimethylates two adjacent adenosines (A1518 and A1519) in the loop of a conserved hairpin near the 3'-end of 16S rRNA in the 30S particle. May play a critical role in biogenesis of 30S subunits. This is Ribosomal RNA small subunit methyltransferase A from Francisella tularensis subsp. novicida (strain U112).